The chain runs to 706 residues: Elongation factor G (706 aa).

The region spanning 8-295 is the tr-type G domain; the sequence is ELYRNFGIMA…AVIDYLPSPL (288 aa). Residues 17–24, 92–96, and 146–149 contribute to the GTP site; these read AHIDAGKT, DTPGH, and NKMD.

The protein belongs to the TRAFAC class translation factor GTPase superfamily. Classic translation factor GTPase family. EF-G/EF-2 subfamily.

Its subcellular location is the cytoplasm. Catalyzes the GTP-dependent ribosomal translocation step during translation elongation. During this step, the ribosome changes from the pre-translocational (PRE) to the post-translocational (POST) state as the newly formed A-site-bound peptidyl-tRNA and P-site-bound deacylated tRNA move to the P and E sites, respectively. Catalyzes the coordinated movement of the two tRNA molecules, the mRNA and conformational changes in the ribosome. This is Elongation factor G from Ruegeria sp. (strain TM1040) (Silicibacter sp.).